A 207-amino-acid chain; its full sequence is Large ribosomal subunit protein uL4 (207 aa).

Residues glutamate 56–glycine 76 are disordered. Residues glycine 60–glycine 71 show a composition bias toward basic residues.

This sequence belongs to the universal ribosomal protein uL4 family. Part of the 50S ribosomal subunit.

In terms of biological role, one of the primary rRNA binding proteins, this protein initially binds near the 5'-end of the 23S rRNA. It is important during the early stages of 50S assembly. It makes multiple contacts with different domains of the 23S rRNA in the assembled 50S subunit and ribosome. Functionally, forms part of the polypeptide exit tunnel. The chain is Large ribosomal subunit protein uL4 from Desulfitobacterium hafniense (strain Y51).